Here is a 197-residue protein sequence, read N- to C-terminus: DnaJ homolog subfamily C member 5 (197 aa).

The J domain occupies 13–82; that stretch reads GESLYHVLGL…RNIYDKYGSL (70 aa). The segment at 153 to 197 is disordered; sequence EDLEAQMQSDERDTEGPVLVQPASATETTQLTSDSHASYHTDGFN. The segment covering 175-197 has biased composition (polar residues); it reads ASATETTQLTSDSHASYHTDGFN.

In terms of processing, palmitoylated. Palmitoylation occurs probably in the cysteine-rich domain and regulates DNAJC5 stable membrane attachment.

It localises to the cytoplasm. It is found in the cytosol. The protein resides in the membrane. The protein localises to the cytoplasmic vesicle. Its subcellular location is the secretory vesicle. It localises to the chromaffin granule membrane. It is found in the melanosome. The protein resides in the cell membrane. In terms of biological role, may have an important role in presynaptic function. May be involved in calcium-dependent neurotransmitter release at nerve endings. The polypeptide is DnaJ homolog subfamily C member 5 (Xenopus laevis (African clawed frog)).